The primary structure comprises 309 residues: CDK-activating kinase assembly factor MAT1 (309 aa).

Methionine 1 bears the N-acetylmethionine mark. The RING-type zinc finger occupies 6–50 (CPRCKTTKYRNPSLKLMVNVCGHTLCESCVDLLFVRGAGNCPECG). The residue at position 51 (threonine 51) is a Phosphothreonine. The UIM domain occupies 142–161 (REQEELEEALEVERQEHEQR). Residue serine 279 is modified to Phosphoserine.

In terms of assembly, associates primarily with CDK7 and cyclin H to form the CAK complex. CAK can further associate with the core-TFIIH to form the TFIIH basal transcription factor.

The protein localises to the nucleus. In terms of biological role, stabilizes the cyclin H-CDK7 complex to form a functional CDK-activating kinase (CAK) enzymatic complex. CAK activates the cyclin-associated kinases CDK1, CDK2, CDK4 and CDK6 by threonine phosphorylation. CAK complexed to the core-TFIIH basal transcription factor activates RNA polymerase II by serine phosphorylation of the repetitive C-terminal domain (CTD) of its large subunit (POLR2A), allowing its escape from the promoter and elongation of the transcripts. Involved in cell cycle control and in RNA transcription by RNA polymerase II. This chain is CDK-activating kinase assembly factor MAT1 (Mnat1), found in Mus musculus (Mouse).